An 84-amino-acid chain; its full sequence is MANHKSSLKRIRQEETRRLHNRYYGKTMRNAVRKLRATTDKKEAVAMYPGITKMLDKLAKTNVIHKNKANNLKSKLALYINKLA.

The protein belongs to the bacterial ribosomal protein bS20 family.

Functionally, binds directly to 16S ribosomal RNA. This chain is Small ribosomal subunit protein bS20, found in Bacteroides thetaiotaomicron (strain ATCC 29148 / DSM 2079 / JCM 5827 / CCUG 10774 / NCTC 10582 / VPI-5482 / E50).